A 204-amino-acid polypeptide reads, in one-letter code: Large ribosomal subunit protein uL4 (204 aa).

Positions 48 to 75 (HTKGRSDVSGGGKKPWRQKGRGGARAGS) are disordered.

The protein belongs to the universal ribosomal protein uL4 family. Part of the 50S ribosomal subunit.

Its function is as follows. One of the primary rRNA binding proteins, this protein initially binds near the 5'-end of the 23S rRNA. It is important during the early stages of 50S assembly. It makes multiple contacts with different domains of the 23S rRNA in the assembled 50S subunit and ribosome. Functionally, forms part of the polypeptide exit tunnel. The polypeptide is Large ribosomal subunit protein uL4 (Campylobacter fetus subsp. fetus (strain 82-40)).